Reading from the N-terminus, the 423-residue chain is Transmembrane protein 130 (423 aa).

Positions 1–24 (MAQAVWSRLGRILWLSCLLPWAPA) are cleaved as a signal peptide. Residues 25–339 (GVAAGLYELN…IQVWPSRIQP (315 aa)) are Extracellular-facing. 3 N-linked (GlcNAc...) asparagine glycosylation sites follow: asparagine 34, asparagine 197, and asparagine 300. Positions 147–233 (WPSSYLTKTI…AVMQKTGDFS (87 aa)) constitute a PKD domain. The helical transmembrane segment at 340 to 360 (AVFAFPCATLITVMLAFIMYM) threads the bilayer. Over 361 to 423 (TLRNATQQKD…LYKSVKTYTV (63 aa)) the chain is Cytoplasmic.

Its subcellular location is the golgi apparatus membrane. This is Transmembrane protein 130 (TMEM130) from Pongo abelii (Sumatran orangutan).